A 783-amino-acid chain; its full sequence is DNA ligase (783 aa).

Residues 42–46 (DAEYD), 91–92 (SL), and E125 contribute to the NAD(+) site. K127 functions as the N6-AMP-lysine intermediate in the catalytic mechanism. R148, E185, K302, and K326 together coordinate NAD(+). C421, C423, C445, and C451 together coordinate Zn(2+). Residues 705-783 (KTDTAVAGKT…EDEWLELVAG (79 aa)) form the BRCT domain.

Belongs to the NAD-dependent DNA ligase family. LigA subfamily. Mg(2+) serves as cofactor. Mn(2+) is required as a cofactor.

It carries out the reaction NAD(+) + (deoxyribonucleotide)n-3'-hydroxyl + 5'-phospho-(deoxyribonucleotide)m = (deoxyribonucleotide)n+m + AMP + beta-nicotinamide D-nucleotide.. DNA ligase that catalyzes the formation of phosphodiester linkages between 5'-phosphoryl and 3'-hydroxyl groups in double-stranded DNA using NAD as a coenzyme and as the energy source for the reaction. It is essential for DNA replication and repair of damaged DNA. The polypeptide is DNA ligase (Caulobacter vibrioides (strain ATCC 19089 / CIP 103742 / CB 15) (Caulobacter crescentus)).